The primary structure comprises 345 residues: Opioid-binding protein/cell adhesion molecule (345 aa).

The first 27 residues, 1-27 (MGVCGYLFLPWKCLVVVSLRLLFLVPT), serve as a signal peptide directing secretion. 3 Ig-like C2-type domains span residues 39–126 (PKAM…PKTS), 136–219 (PQIM…VKIT), and 223–310 (PPYI…ASIT). 3 N-linked (GlcNAc...) asparagine glycosylation sites follow: Asn-44, Asn-70, and Asn-140. A disulfide bond links Cys-57 and Cys-115. Intrachain disulfides connect Cys-157–Cys-202 and Cys-244–Cys-296. N-linked (GlcNAc...) asparagine glycosylation is found at Asn-285, Asn-293, and Asn-306. The GPI-anchor amidated asparagine moiety is linked to residue Asn-322. The propeptide at 323–345 (SASRALACLWLSGTFFAHFFIKF) is removed in mature form.

The protein belongs to the immunoglobulin superfamily. IgLON family.

Its subcellular location is the cell membrane. Its function is as follows. Binds opioids in the presence of acidic lipids; probably involved in cell contact. This Rattus norvegicus (Rat) protein is Opioid-binding protein/cell adhesion molecule (Opcml).